The sequence spans 327 residues: Undecaprenyl-phosphate 4-deoxy-4-formamido-L-arabinose transferase (327 aa).

The next 2 helical transmembrane spans lie at 236 to 256 (LSIFGSVIALLGFAFGLLLVV) and 270 to 290 (VFMLFAVLFMFIGAQFVGMGL).

It belongs to the glycosyltransferase 2 family.

Its subcellular location is the cell inner membrane. It carries out the reaction UDP-4-deoxy-4-formamido-beta-L-arabinose + di-trans,octa-cis-undecaprenyl phosphate = 4-deoxy-4-formamido-alpha-L-arabinopyranosyl di-trans,octa-cis-undecaprenyl phosphate + UDP. It participates in glycolipid biosynthesis; 4-amino-4-deoxy-alpha-L-arabinose undecaprenyl phosphate biosynthesis; 4-amino-4-deoxy-alpha-L-arabinose undecaprenyl phosphate from UDP-4-deoxy-4-formamido-beta-L-arabinose and undecaprenyl phosphate: step 1/2. The protein operates within bacterial outer membrane biogenesis; lipopolysaccharide biosynthesis. Catalyzes the transfer of 4-deoxy-4-formamido-L-arabinose from UDP to undecaprenyl phosphate. The modified arabinose is attached to lipid A and is required for resistance to polymyxin and cationic antimicrobial peptides. This is Undecaprenyl-phosphate 4-deoxy-4-formamido-L-arabinose transferase from Klebsiella pneumoniae subsp. pneumoniae (strain ATCC 700721 / MGH 78578).